Here is a 320-residue protein sequence, read N- to C-terminus: ATP-dependent 6-phosphofructokinase (320 aa).

Residue glycine 12 coordinates ATP. ADP contacts are provided by residues 22 to 26 (RGVVR) and 55 to 60 (RYSVSD). Residues 73 to 74 (RF) and 103 to 106 (GDGS) contribute to the ATP site. Residue aspartate 104 coordinates Mg(2+). 126–128 (TID) contributes to the substrate binding site. Aspartate 128 serves as the catalytic Proton acceptor. Arginine 155 provides a ligand contact to ADP. Substrate is bound by residues arginine 163 and 170–172 (MGR). Residues 186–188 (GCE), lysine 212, and 214–216 (KKH) each bind ADP. Substrate contacts are provided by residues glutamate 223, arginine 244, and 250 to 253 (HIQR).

It belongs to the phosphofructokinase type A (PFKA) family. ATP-dependent PFK group I subfamily. Prokaryotic clade 'B1' sub-subfamily. As to quaternary structure, homotetramer. It depends on Mg(2+) as a cofactor.

It is found in the cytoplasm. It catalyses the reaction beta-D-fructose 6-phosphate + ATP = beta-D-fructose 1,6-bisphosphate + ADP + H(+). It functions in the pathway carbohydrate degradation; glycolysis; D-glyceraldehyde 3-phosphate and glycerone phosphate from D-glucose: step 3/4. Its activity is regulated as follows. Allosterically activated by ADP and other diphosphonucleosides, and allosterically inhibited by phosphoenolpyruvate. Its function is as follows. Catalyzes the phosphorylation of D-fructose 6-phosphate to fructose 1,6-bisphosphate by ATP, the first committing step of glycolysis. The polypeptide is ATP-dependent 6-phosphofructokinase (Erwinia tasmaniensis (strain DSM 17950 / CFBP 7177 / CIP 109463 / NCPPB 4357 / Et1/99)).